Here is a 364-residue protein sequence, read N- to C-terminus: Probable dual-specificity RNA methyltransferase RlmN (364 aa).

Glu-107 serves as the catalytic Proton acceptor. The region spanning 113 to 346 (HDYGNSVCVT…ATIRREQGSD (234 aa)) is the Radical SAM core domain. A disulfide bond links Cys-120 and Cys-351. The [4Fe-4S] cluster site is built by Cys-127, Cys-131, and Cys-134. S-adenosyl-L-methionine contacts are provided by residues 177 to 178 (GE), Ser-209, 232 to 234 (SLH), and Asn-308. The active-site S-methylcysteine intermediate is Cys-351.

Belongs to the radical SAM superfamily. RlmN family. Requires [4Fe-4S] cluster as cofactor.

It localises to the cytoplasm. It catalyses the reaction adenosine(2503) in 23S rRNA + 2 reduced [2Fe-2S]-[ferredoxin] + 2 S-adenosyl-L-methionine = 2-methyladenosine(2503) in 23S rRNA + 5'-deoxyadenosine + L-methionine + 2 oxidized [2Fe-2S]-[ferredoxin] + S-adenosyl-L-homocysteine. The enzyme catalyses adenosine(37) in tRNA + 2 reduced [2Fe-2S]-[ferredoxin] + 2 S-adenosyl-L-methionine = 2-methyladenosine(37) in tRNA + 5'-deoxyadenosine + L-methionine + 2 oxidized [2Fe-2S]-[ferredoxin] + S-adenosyl-L-homocysteine. Specifically methylates position 2 of adenine 2503 in 23S rRNA and position 2 of adenine 37 in tRNAs. Confers resistance to some classes of antibiotics. The protein is Probable dual-specificity RNA methyltransferase RlmN of Staphylococcus aureus (strain MW2).